The primary structure comprises 159 residues: Ribosomal RNA large subunit methyltransferase H (159 aa).

S-adenosyl-L-methionine-binding positions include Leu76, Gly108, and 127–132 (FSKMTF).

This sequence belongs to the RNA methyltransferase RlmH family. As to quaternary structure, homodimer.

It localises to the cytoplasm. The enzyme catalyses pseudouridine(1915) in 23S rRNA + S-adenosyl-L-methionine = N(3)-methylpseudouridine(1915) in 23S rRNA + S-adenosyl-L-homocysteine + H(+). Functionally, specifically methylates the pseudouridine at position 1915 (m3Psi1915) in 23S rRNA. This is Ribosomal RNA large subunit methyltransferase H from Staphylococcus haemolyticus (strain JCSC1435).